A 157-amino-acid chain; its full sequence is Large ribosomal subunit protein uL15 (157 aa).

The interval 1–40 is disordered; the sequence is MKLHELSDNPGATKKRMRIGRGPGSGKGKMGGRGIKGQKS. Positions 21–35 are enriched in gly residues; sequence RGPGSGKGKMGGRGI.

This sequence belongs to the universal ribosomal protein uL15 family. As to quaternary structure, part of the 50S ribosomal subunit.

In terms of biological role, binds to the 23S rRNA. The sequence is that of Large ribosomal subunit protein uL15 from Ruegeria pomeroyi (strain ATCC 700808 / DSM 15171 / DSS-3) (Silicibacter pomeroyi).